The following is an 86-amino-acid chain: Large ribosomal subunit protein bL27 (86 aa).

Belongs to the bacterial ribosomal protein bL27 family.

The sequence is that of Large ribosomal subunit protein bL27 from Xanthomonas axonopodis pv. citri (strain 306).